The primary structure comprises 61 residues: Small ribosomal subunit protein uS14 (61 aa).

The Zn(2+) site is built by cysteine 24, cysteine 27, cysteine 40, and cysteine 43.

Belongs to the universal ribosomal protein uS14 family. Zinc-binding uS14 subfamily. Part of the 30S ribosomal subunit. Contacts proteins S3 and S10. Zn(2+) is required as a cofactor.

Binds 16S rRNA, required for the assembly of 30S particles and may also be responsible for determining the conformation of the 16S rRNA at the A site. The polypeptide is Small ribosomal subunit protein uS14 (Chloroflexus aurantiacus (strain ATCC 29364 / DSM 637 / Y-400-fl)).